A 97-amino-acid chain; its full sequence is Mapk-regulated corepressor-interacting protein 1 (97 aa).

2 disordered regions span residues 1 to 29 (MTSSPVSRVVYNGKRPASNTRSPSSNEIF) and 72 to 97 (SNSLKSFKPIDLNDLKRRTVQDPKKS). Residues 17–28 (ASNTRSPSSNEI) are compositionally biased toward polar residues. Residues 82 to 97 (DLNDLKRRTVQDPKKS) show a composition bias toward basic and acidic residues.

It belongs to the MCRIP family.

The protein localises to the nucleus. The protein resides in the cytoplasm. It is found in the stress granule. In terms of biological role, may play a role in the regulation of the epithelial-mesenchymal transition. This is Mapk-regulated corepressor-interacting protein 1 (Mcrip1) from Xenopus tropicalis (Western clawed frog).